The primary structure comprises 211 residues: MNKGLIGKKIGMTQIFADDGRRIPVTVVEAGPCVVIQKKTKEKDGYNAIQVGFDAKEAAKANSATVGHCKAAGSGAFSFFRELRVDNVDSYNVGDVLNADLFAAGDVIDVTGTSIGKGFQGVIKRWGFKGGRSSHGSRFHRAPGSIGCSATPSRVFKNKKMPGQLGNERVTVQRLKVVRVDAADNLILVGGAIPGSTNGLVFIKDSVKAKK.

Belongs to the universal ribosomal protein uL3 family. In terms of assembly, part of the 50S ribosomal subunit. Forms a cluster with proteins L14 and L19.

Its function is as follows. One of the primary rRNA binding proteins, it binds directly near the 3'-end of the 23S rRNA, where it nucleates assembly of the 50S subunit. This chain is Large ribosomal subunit protein uL3, found in Geotalea daltonii (strain DSM 22248 / JCM 15807 / FRC-32) (Geobacter daltonii).